The following is a 264-amino-acid chain: Thymidylate synthase (264 aa).

DUMP is bound at residue arginine 21. Position 51 (histidine 51) interacts with (6R)-5,10-methylene-5,6,7,8-tetrahydrofolate. Position 126–127 (126–127) interacts with dUMP; that stretch reads RR. Cysteine 146 functions as the Nucleophile in the catalytic mechanism. DUMP is bound by residues 166 to 169, asparagine 177, and 207 to 209; these read RSAD and HIY. Residue aspartate 169 coordinates (6R)-5,10-methylene-5,6,7,8-tetrahydrofolate. Alanine 263 lines the (6R)-5,10-methylene-5,6,7,8-tetrahydrofolate pocket.

The protein belongs to the thymidylate synthase family. Bacterial-type ThyA subfamily. In terms of assembly, homodimer.

It localises to the cytoplasm. It catalyses the reaction dUMP + (6R)-5,10-methylene-5,6,7,8-tetrahydrofolate = 7,8-dihydrofolate + dTMP. It participates in pyrimidine metabolism; dTTP biosynthesis. Its function is as follows. Catalyzes the reductive methylation of 2'-deoxyuridine-5'-monophosphate (dUMP) to 2'-deoxythymidine-5'-monophosphate (dTMP) while utilizing 5,10-methylenetetrahydrofolate (mTHF) as the methyl donor and reductant in the reaction, yielding dihydrofolate (DHF) as a by-product. This enzymatic reaction provides an intracellular de novo source of dTMP, an essential precursor for DNA biosynthesis. In Bacteroides thetaiotaomicron (strain ATCC 29148 / DSM 2079 / JCM 5827 / CCUG 10774 / NCTC 10582 / VPI-5482 / E50), this protein is Thymidylate synthase.